Here is a 214-residue protein sequence, read N- to C-terminus: MLQPQVPVAREGVPFIGFAAFLTLVSAASECEILTFIFLLATAFTLYFFRDPERFVPDDPSALISPADGKIIVIEKTDKQDFIEGEALKISIFMNVFNVHVNRAPIAGKVDKIIYTPGKFYSADSSQGAEYNENCGIVLTTNSGKKIAFVQVAGLIARRIVCWLEPNDTIQSGRRVGLIRFGSRVDLYLPTDTALSVSVGDKVRAGETILGQII.

Catalysis depends on Ser183, which acts as the Schiff-base intermediate with substrate; via pyruvic acid. A Pyruvic acid (Ser); by autocatalysis modification is found at Ser183.

It belongs to the phosphatidylserine decarboxylase family. PSD-A subfamily. Heterodimer of a large membrane-associated beta subunit and a small pyruvoyl-containing alpha subunit. The cofactor is pyruvate. In terms of processing, is synthesized initially as an inactive proenzyme. Formation of the active enzyme involves a self-maturation process in which the active site pyruvoyl group is generated from an internal serine residue via an autocatalytic post-translational modification. Two non-identical subunits are generated from the proenzyme in this reaction, and the pyruvate is formed at the N-terminus of the alpha chain, which is derived from the carboxyl end of the proenzyme. The post-translation cleavage follows an unusual pathway, termed non-hydrolytic serinolysis, in which the side chain hydroxyl group of the serine supplies its oxygen atom to form the C-terminus of the beta chain, while the remainder of the serine residue undergoes an oxidative deamination to produce ammonia and the pyruvoyl prosthetic group on the alpha chain.

The protein localises to the cell membrane. The catalysed reaction is a 1,2-diacyl-sn-glycero-3-phospho-L-serine + H(+) = a 1,2-diacyl-sn-glycero-3-phosphoethanolamine + CO2. The protein operates within phospholipid metabolism; phosphatidylethanolamine biosynthesis; phosphatidylethanolamine from CDP-diacylglycerol: step 2/2. Functionally, catalyzes the formation of phosphatidylethanolamine (PtdEtn) from phosphatidylserine (PtdSer). This chain is Phosphatidylserine decarboxylase proenzyme, found in Desulfotalea psychrophila (strain LSv54 / DSM 12343).